We begin with the raw amino-acid sequence, 380 residues long: Cytochrome b (380 aa).

4 consecutive transmembrane segments (helical) span residues 33 to 53 (FGSL…FLAM), 77 to 98 (WLIR…YMHI), 113 to 133 (WNIG…GYVL), and 178 to 198 (FFAF…LHLL). Residues H83 and H97 each contribute to the heme b site. Positions 182 and 196 each coordinate heme b. Position 201 (H201) interacts with a ubiquinone. 4 consecutive transmembrane segments (helical) span residues 226-246 (YKDL…ALFA), 288-308 (LGGV…PILH), 320-340 (LTQF…WIGG), and 347-367 (FIII…VLAP).

The protein belongs to the cytochrome b family. In terms of assembly, the cytochrome bc1 complex contains 3 respiratory subunits (MT-CYB, CYC1 and UQCRFS1), 2 core proteins (UQCRC1 and UQCRC2) and probably 6 low-molecular weight proteins. Heme b serves as cofactor.

It localises to the mitochondrion inner membrane. Its function is as follows. Component of the ubiquinol-cytochrome c reductase complex (complex III or cytochrome b-c1 complex) that is part of the mitochondrial respiratory chain. The b-c1 complex mediates electron transfer from ubiquinol to cytochrome c. Contributes to the generation of a proton gradient across the mitochondrial membrane that is then used for ATP synthesis. The sequence is that of Cytochrome b (mt-cyb) from Salmo salar (Atlantic salmon).